A 156-amino-acid chain; its full sequence is Small ribosomal subunit protein uS7 (156 aa).

It belongs to the universal ribosomal protein uS7 family. Part of the 30S ribosomal subunit. Contacts proteins S9 and S11.

Functionally, one of the primary rRNA binding proteins, it binds directly to 16S rRNA where it nucleates assembly of the head domain of the 30S subunit. Is located at the subunit interface close to the decoding center, probably blocks exit of the E-site tRNA. The sequence is that of Small ribosomal subunit protein uS7 from Bacillus velezensis (strain DSM 23117 / BGSC 10A6 / LMG 26770 / FZB42) (Bacillus amyloliquefaciens subsp. plantarum).